The chain runs to 151 residues: Small ribosomal subunit protein uS15 (151 aa).

This sequence belongs to the universal ribosomal protein uS15 family. As to quaternary structure, component of the small ribosomal subunit.

It is found in the cytoplasm. Component of the small ribosomal subunit. The ribosome is a large ribonucleoprotein complex responsible for the synthesis of proteins in the cell. The polypeptide is Small ribosomal subunit protein uS15 (rps13) (Gillichthys mirabilis (Long-jawed mudsucker)).